The primary structure comprises 129 residues: M-zodatoxin-Lt8c (129 aa).

Residues 1–20 form the signal peptide; the sequence is MKYFVVALALVAAFACIAES. Positions 21–60 are excised as a propeptide; sequence KPAESEHELAEVEEENELADLEDAVWLEHLADLSDLEEAR. A Processing quadruplet motif motif is present at residues 57 to 60; the sequence is EEAR.

Post-translationally, cleavage of the propeptide depends on the processing quadruplet motif (XXXR, with at least one of X being E). As to expression, expressed by the venom gland.

It is found in the secreted. Functionally, insecticidal, cytolytic and antimicrobial peptide. Forms voltage-dependent, ion-permeable channels in membranes. At high concentration causes cell membrane lysis. The protein is M-zodatoxin-Lt8c (cit 1-3) of Lachesana tarabaevi (Spider).